The chain runs to 851 residues: DNA mismatch repair protein MutS (851 aa).

602-609 (GPNMSGKS) contacts ATP.

This sequence belongs to the DNA mismatch repair MutS family.

In terms of biological role, this protein is involved in the repair of mismatches in DNA. It is possible that it carries out the mismatch recognition step. This protein has a weak ATPase activity. This chain is DNA mismatch repair protein MutS, found in Streptococcus pyogenes serotype M18 (strain MGAS8232).